The sequence spans 527 residues: Nucleus accumbens-associated protein 1 (527 aa).

In terms of domain architecture, BTB spans 30–94 (CDVSVVVKGH…CYTGRLSMNV (65 aa)). Positions 131–153 (QGLHAEEAPSSEPQSPVAQTSGW) are disordered. Residues 141–152 (SEPQSPVAQTSG) are compositionally biased toward polar residues. Lys167 is covalently cross-linked (Glycyl lysine isopeptide (Lys-Gly) (interchain with G-Cter in SUMO1); alternate). Lys167 is covalently cross-linked (Glycyl lysine isopeptide (Lys-Gly) (interchain with G-Cter in SUMO2); alternate). A Glycyl lysine isopeptide (Lys-Gly) (interchain with G-Cter in SUMO2) cross-link involves residue Lys183. Ser188 bears the Phosphoserine mark. The disordered stretch occupies residues 210-292 (DLAANRPHQP…DEEEDGGEEG (83 aa)). A compositionally biased stretch (low complexity) spans 225–251 (APVVAAAQPAVAAGAGQPAGGVAAAGG). Positions 255-277 (GPSTSERTSPGTSSAYTSDSPGS) are enriched in polar residues. Ser259 carries the phosphoserine; by PKC modification. A compositionally biased stretch (acidic residues) spans 281–292 (EEDEEEDGGEEG). Residues Lys318, Lys452, Lys480, Lys483, and Lys498 each participate in a glycyl lysine isopeptide (Lys-Gly) (interchain with G-Cter in SUMO2) cross-link. Positions 374–471 (GTNVYITRAQ…DMCTNARRVV (98 aa)) constitute a BEN domain.

As to quaternary structure, homooligomer; mediated by the BTB domain. Interacts with HDAC3 and HDAC4. Interacts (via BTB domain) with CUL3, PSMD7 and RCOR1. As to expression, overexpressed in several types of carcinomas including ovarian serous carcinomas. Expression levels positively correlate with tumor recurrence in ovarian serous carcinomas, and intense immunoreactivity in primary ovarian tumors predicts early recurrence. Up-regulated in ovarian carcinomas after chemotherapy, suggesting a role in development of chemotherapy resistance in ovarian cancer.

The protein resides in the nucleus. Its subcellular location is the cytoplasm. Functionally, functions as a transcriptional repressor. Seems to function as a transcriptional corepressor in neuronal cells through recruitment of HDAC3 and HDAC4. Contributes to tumor progression, and tumor cell proliferation and survival. This may be mediated at least in part through repressing transcriptional activity of GADD45GIP1. Required for recruiting the proteasome from the nucleus to the cytoplasm and dendritic spines. The polypeptide is Nucleus accumbens-associated protein 1 (NACC1) (Homo sapiens (Human)).